Reading from the N-terminus, the 224-residue chain is MGYSKTLVAGLFAMLLLAPAVLATDPDPLQDFCVADLDGKAVSVNGHTCKPMSEAGDDFLFSSKLAKAGNTSTPNGSAVTELDVAEWPGTNTLGVSMNRVDFAPGGTNPPHIHPRATEIGIVMKGELLVGILGSLDSGNKLYSRVVRAGETFLIPRGLMHFQFNVGKTEASMVVSFNSQNPGIVFVPLTLFGSNPPIPTPVLTKALRVEARVVELLKSKFAAGF.

An N-terminal signal peptide occupies residues 1-23; it reads MGYSKTLVAGLFAMLLLAPAVLA. C33 and C49 are joined by a disulfide. One can recognise a Cupin type-1 domain in the interval 63–214; that stretch reads SKLAKAGNTS…ALRVEARVVE (152 aa). Residues N70 and N75 are each glycosylated (N-linked (GlcNAc...) asparagine). Mn(2+) contacts are provided by H111, H113, E118, and H160.

Belongs to the germin family. In terms of assembly, oligomer (believed to be a pentamer but probably hexamer).

It is found in the secreted. The protein localises to the extracellular space. The protein resides in the apoplast. Its subcellular location is the cytoplasm. It localises to the cell wall. It catalyses the reaction oxalate + O2 + 2 H(+) = H2O2 + 2 CO2. In terms of biological role, produces developmental and stress-related release of hydrogen peroxide in the apoplast. May play an important role in several aspects of plant growth and defense mechanisms. The polypeptide is Oxalate oxidase GF-2.8 (Triticum aestivum (Wheat)).